Here is a 485-residue protein sequence, read N- to C-terminus: Glycogen synthase (485 aa).

Residue K21 participates in ADP-alpha-D-glucose binding.

This sequence belongs to the glycosyltransferase 1 family. Bacterial/plant glycogen synthase subfamily.

It carries out the reaction [(1-&gt;4)-alpha-D-glucosyl](n) + ADP-alpha-D-glucose = [(1-&gt;4)-alpha-D-glucosyl](n+1) + ADP + H(+). The protein operates within glycan biosynthesis; glycogen biosynthesis. In terms of biological role, synthesizes alpha-1,4-glucan chains using ADP-glucose. The chain is Glycogen synthase from Pseudomonas savastanoi pv. phaseolicola (strain 1448A / Race 6) (Pseudomonas syringae pv. phaseolicola (strain 1448A / Race 6)).